The primary structure comprises 562 residues: Putative transport protein NT01EI_2530 (562 aa).

Helical transmembrane passes span 8 to 28, 32 to 52, 66 to 86, 94 to 114, 118 to 138, and 158 to 178; these read LLTGNYILLLFVVLALGLCLG, LGSIQLGNSIGVLVVSLLLGQ, FMLFIFCVGVEAGPNFFSIFF, MLALVMVASALCIALGLGKLF, IGLTAGMLAGSMTSTPVLVGA, and HLSLGYALTYLVGLVSLIFGA. RCK C-terminal domains are found at residues 202 to 288 and 290 to 373; these read LDND…SFRN and KEVF…RIGF. 5 consecutive transmembrane segments (helical) span residues 383 to 403, 406 to 426, 443 to 463, 477 to 497, and 541 to 561; these read LLAFCAFFIIGLMIGLITFQF, FSFGIGNAAGLLFAGIMLGFL, MVKEFGLMVFMAGVGLSAGAG, IAGLIVSLVPVVICFLFGAFV, and IANVLLTLAGTLIIIVWPGVV.

Belongs to the AAE transporter (TC 2.A.81) family. YbjL subfamily.

The protein localises to the cell membrane. The chain is Putative transport protein NT01EI_2530 from Edwardsiella ictaluri (strain 93-146).